The primary structure comprises 459 residues: Glycosyl hydrolase family 109 protein (459 aa).

A signal peptide (tat-type signal) is located at residues 1 to 31 (MHNIHRRNFLKAAGAATAGLVTANIALNAYA). NAD(+) is bound by residues 64–65 (ER), Asp-86, 135–138 (WEWH), 155–156 (EV), and Asn-184. Substrate contacts are provided by residues Tyr-213, Arg-232, 244-247 (YPTH), and Tyr-326. Residue Tyr-244 participates in NAD(+) binding.

The protein belongs to the Gfo/Idh/MocA family. Glycosyl hydrolase 109 subfamily. Requires NAD(+) as cofactor. Predicted to be exported by the Tat system. The position of the signal peptide cleavage has not been experimentally proven.

Functionally, glycosidase. The polypeptide is Glycosyl hydrolase family 109 protein (Shewanella baltica (strain OS195)).